The sequence spans 333 residues: Protein APEM9 (333 aa).

The Cytoplasmic portion of the chain corresponds to 1-90; that stretch reads MEATDIWGEI…ELRDVFGEVA (90 aa). The helical transmembrane segment at 91–102 threads the bilayer; it reads AIPVQVLLTGVC. Residues 103-268 lie on the Peroxisomal side of the membrane; sequence LQISNGSYLG…KVGNTQFSMS (166 aa). Residues 269 to 285 traverse the membrane as a helical segment; that stretch reads RGKVAVSLVGLIICYAL. The Cytoplasmic segment spans residues 286-333; that stretch reads KRKRAALIRIIRRQMESTRKAIVDFWKLAFSYQVNPLAAIQSIPSTTT.

Interacts with PEX6 and PEX19-1, but not with PEX1. Interacts (via N-terminus) with PEX13, and (via N-terminus and C-terminus) with PEX16. Expressed in roots, leaves, stems, flowers, buds and fruits.

It localises to the peroxisome membrane. Its function is as follows. Involved in peroxisome biogenesis and matrix protein import. Required for pollen maturation and in vivo germination via its role in peroxisomal function, which partially involves jasmonic acid biosynthesis. Transported to peroxisomes via the interaction with PEX19-1. Required for peroxisomal protein import by acting as an anchoring protein for the AAA ATPase complex, which consists of PEX1 and PEX6. This is Protein APEM9 from Arabidopsis thaliana (Mouse-ear cress).